The sequence spans 357 residues: 3-isopropylmalate dehydrogenase (357 aa).

76–89 (GYQWESLDISVRPE) serves as a coordination point for NAD(+). Substrate contacts are provided by R96, R106, R134, and D224. Mg(2+) contacts are provided by D224, D248, and D252. 282–294 (GSAPDIAGQNIAN) serves as a coordination point for NAD(+).

The protein belongs to the isocitrate and isopropylmalate dehydrogenases family. LeuB type 1 subfamily. In terms of assembly, homodimer. Mg(2+) is required as a cofactor. Requires Mn(2+) as cofactor.

The protein localises to the cytoplasm. The catalysed reaction is (2R,3S)-3-isopropylmalate + NAD(+) = 4-methyl-2-oxopentanoate + CO2 + NADH. Its pathway is amino-acid biosynthesis; L-leucine biosynthesis; L-leucine from 3-methyl-2-oxobutanoate: step 3/4. In terms of biological role, catalyzes the oxidation of 3-carboxy-2-hydroxy-4-methylpentanoate (3-isopropylmalate) to 3-carboxy-4-methyl-2-oxopentanoate. The product decarboxylates to 4-methyl-2 oxopentanoate. This Hydrogenovibrio crunogenus (strain DSM 25203 / XCL-2) (Thiomicrospira crunogena) protein is 3-isopropylmalate dehydrogenase.